The primary structure comprises 63 residues: Muscarinic toxin 2 (63 aa).

4 disulfides stabilise this stretch: Cys3-Cys22, Cys17-Cys42, Cys44-Cys55, and Cys56-Cys61.

Belongs to the three-finger toxin family. Short-chain subfamily. Type B muscarinic toxin sub-subfamily. In terms of assembly, monomer. Expressed by the venom gland.

The protein localises to the secreted. Blocks M2 muscarinic acetylcholine receptors (CHRM2). Fully blocks the binding of N-methylscopolamine (NMS) and oxotremorine-M to M2 receptors, slightly increased NMS binding to M1 receptors. In Dendroaspis angusticeps (Eastern green mamba), this protein is Muscarinic toxin 2.